Reading from the N-terminus, the 91-residue chain is Small ribosomal subunit protein uS15 (91 aa).

It belongs to the universal ribosomal protein uS15 family. In terms of assembly, part of the 30S ribosomal subunit. Forms a bridge to the 50S subunit in the 70S ribosome, contacting the 23S rRNA.

Functionally, one of the primary rRNA binding proteins, it binds directly to 16S rRNA where it helps nucleate assembly of the platform of the 30S subunit by binding and bridging several RNA helices of the 16S rRNA. Its function is as follows. Forms an intersubunit bridge (bridge B4) with the 23S rRNA of the 50S subunit in the ribosome. This chain is Small ribosomal subunit protein uS15, found in Rickettsia canadensis (strain McKiel).